The following is a 477-amino-acid chain: Probable cytosolic Fe-S cluster assembly factor GM20417 (477 aa).

8 residues coordinate [4Fe-4S] cluster: cysteine 23, cysteine 68, cysteine 71, cysteine 74, cysteine 187, cysteine 243, cysteine 395, and cysteine 399.

The protein belongs to the NARF family.

Functionally, component of the cytosolic iron-sulfur (Fe/S) protein assembly machinery. Required for maturation of extramitochondrial Fe/S proteins. This is Probable cytosolic Fe-S cluster assembly factor GM20417 from Drosophila sechellia (Fruit fly).